A 503-amino-acid chain; its full sequence is MDSDNDNDFCDNVDSGNVSSGDDGDDDFGMEVDLPSSADRQMDQDDYQYKVLTTDEIVQHQREIIDEANLLLKLPTPTTRILLNHFKWDKEKLLEKYFDDNTDEFFKCAHVINPFNATEAIKQKTSRSQCEECEICFSQLPPDSMAGLECGHRFCMPCWHEYLSTKIVAEGLGQTISCAAHGCDILVDDVTVANLVTDARVRVKYQQLITNSFVECNQLLRWCPSVDCTYAVKVPYAEPRRVHCKCGHVFCFACGENWHDPVKCRWLKKWIKKCDDDSETSNWIAANTKECPRCSVTIEKDGGCNHMVCKNQNCKNEFCWVCLGSWEPHGSSWYNCNRYDEDEAKTARDAQEKLRSSLARYLHYYNRYMNHMQSMKFENKLYASVKQKMEEMQQHNMSWIEVQFLKKAVDILCQCRQTLMYTYVFAYYLKKNNQSMIFEDNQKDLESATEMLSEYLERDITSENLADIKQKVQDKYRYCEKRCSVLLKHVHEGYDKEWWEYTE.

Acidic residues predominate over residues 1-11 (MDSDNDNDFCD). The interval 1–40 (MDSDNDNDFCDNVDSGNVSSGDDGDDDFGMEVDLPSSADR) is disordered. Low complexity predominate over residues 12 to 21 (NVDSGNVSSG). Residues 129–340 (QCEECEICFS…SSWYNCNRYD (212 aa)) are TRIAD supradomain. Zn(2+) contacts are provided by Cys-133, Cys-136, Cys-150, His-152, Cys-155, Cys-158, Cys-178, Cys-183, Cys-223, Cys-228, Cys-244, Cys-246, Cys-251, Cys-254, His-259, Cys-264, Cys-291, and Cys-294. The segment at 133 to 183 (CEICFSQLPPDSMAGLECGHRFCMPCWHEYLSTKIVAEGLGQTISCAAHGC) adopts an RING-type 1 zinc-finger fold. The segment at 133–201 (CEICFSQLPP…VANLVTDARV (69 aa)) is important for interaction with Ubc10. An IBR-type zinc finger spans residues 203–264 (VKYQQLITNS…GENWHDPVKC (62 aa)). The RING-type 2; atypical zinc-finger motif lies at 291–322 (CPRCSVTIEKDGGCNHMVCKNQNCKNEFCWVC). The active site involves Cys-304. Residues Cys-309, Cys-314, Cys-319, Cys-322, His-329, and Cys-336 each coordinate Zn(2+). Residues 341-361 (EDEAKTARDAQEKLRSSLARY) adopt a coiled-coil conformation.

It belongs to the RBR family. Ariadne subfamily. Can form homodimers. Interacts (via RING-type 1 zinc finger) with Ubc10. Interacts with the LINC complex member koi. Interacts with park. Interacts with ari-2. Specifically interacts with isoform ECR-A of EcR. In terms of processing, autophosphorylated. As to expression, widely expressed, with prominent levels in the nervous system and female gonads.

The protein resides in the cytoplasm. Its subcellular location is the nucleus. It carries out the reaction [E2 ubiquitin-conjugating enzyme]-S-ubiquitinyl-L-cysteine + [acceptor protein]-L-lysine = [E2 ubiquitin-conjugating enzyme]-L-cysteine + [acceptor protein]-N(6)-ubiquitinyl-L-lysine.. Atypical E3 ubiquitin-protein ligase, which catalyzes ubiquitination of target proteins together with ubiquitin-conjugating enzyme E2 Ubc10. Controls the subcellular localization and morphology of muscle nuclei (myonuclei) by regulating the protein levels and distribution of the LINC (LInker of Nucleoskeleton and Cytoskeleton) complex. Functions by mediating the monoubiquitination of the LINC complex subunit koi leading to its subsequent proteasomal degradation. Appears to function, at least partially redundantly, with the RBR E3 ligase family member park in nuclear localization and morphology. Likely to function in metamorphosis by regulating the proteins levels of EcR isoform A (ECR-A) and its heterodimeric partner usp, via the ubiquitination and subsequent degradation of ECR-A. This Drosophila melanogaster (Fruit fly) protein is E3 ubiquitin-protein ligase ariadne-1.